A 729-amino-acid polypeptide reads, in one-letter code: Polyribonucleotide nucleotidyltransferase (729 aa).

Mg(2+)-binding residues include Asp-485 and Asp-491. The KH domain occupies 552–611 (PRITTMKVAEDKIRTIIGKGGATIKGLIESTGVSIDIDDSGVIQLFSPDKMALEEAQKQI). The region spanning 621–689 (GQTYQGKVSK…KQGRVKLEWK (69 aa)) is the S1 motif domain.

This sequence belongs to the polyribonucleotide nucleotidyltransferase family. In terms of assembly, component of the RNA degradosome, which is a multiprotein complex involved in RNA processing and mRNA degradation. Requires Mg(2+) as cofactor.

The protein localises to the cytoplasm. It catalyses the reaction RNA(n+1) + phosphate = RNA(n) + a ribonucleoside 5'-diphosphate. Its function is as follows. Involved in mRNA degradation. Catalyzes the phosphorolysis of single-stranded polyribonucleotides processively in the 3'- to 5'-direction. The protein is Polyribonucleotide nucleotidyltransferase of Legionella pneumophila (strain Corby).